We begin with the raw amino-acid sequence, 54 residues long: MAATDVRPKITMACQVCKHRNYITRKNRRNDPDRLELKKFCPNCGKHTEHRETR.

This sequence belongs to the bacterial ribosomal protein bL33 family.

The sequence is that of Large ribosomal subunit protein bL33 from Frankia alni (strain DSM 45986 / CECT 9034 / ACN14a).